Consider the following 527-residue polypeptide: Protein disulfide-isomerase A2 (527 aa).

The signal sequence occupies residues 1-20; that stretch reads MDKQLLPVLLLLLGVSGSWG. The tract at residues 20–41 is disordered; it reads GQGEEPGGPSEVLPEEPTGEEV. The Thioredoxin 1 domain occupies 29-155; sequence SEVLPEEPTG…IAEWLRRRVG (127 aa). Residues Cys74 and Cys77 each act as nucleophile in the active site. A disulfide bridge links Cys74 with Cys77. 2 N-linked (GlcNAc...) asparagine glycosylation sites follow: Asn130 and Asn287. The Thioredoxin 2 domain occupies 355–499; it reads VIAITAASVA…FSKFLDSGGH (145 aa). Active-site nucleophile residues include Cys421 and Cys424. Cys421 and Cys424 are joined by a disulfide. The tract at residues 495–527 is disordered; it reads DSGGHLPKEEPKEPAASAPEAQANSTLGPKEEL. A glycan (N-linked (GlcNAc...) asparagine) is linked at Asn518. The Prevents secretion from ER motif lies at 524–527; that stretch reads KEEL.

The protein belongs to the protein disulfide isomerase family. Part of a large chaperone multiprotein complex comprising DNAJB11, HSP90B1, HSPA5, HYOU, PDIA2, PDIA4, PDIA6, PPIB, SDF2L1, UGGT1 and very small amounts of ERP29, but not, or at very low levels, CALR nor CANX. Post-translationally, glycosylated. As to expression, highly expressed in pancreas.

The protein localises to the endoplasmic reticulum lumen. The catalysed reaction is Catalyzes the rearrangement of -S-S- bonds in proteins.. Functionally, acts as an intracellular estrogen-binding protein. May be involved in modulating cellular levels and biological functions of estrogens in the pancreas. May act as a chaperone that inhibits aggregation of misfolded proteins. The protein is Protein disulfide-isomerase A2 of Mus musculus (Mouse).